A 427-amino-acid polypeptide reads, in one-letter code: Transcobalamin-2 (427 aa).

An N-terminal signal peptide occupies residues 1 to 18 (MELLKALLLLSGVLGALA). Cystine bridges form between Cys21–Cys268, Cys116–Cys310, and Cys165–Cys208. Residues 152–156 (TSYYQ), His193, 193–197 (HLSVD), Asn245, Ser248, Gln292, and 395–397 (WQL) contribute to the cob(II)alamin site.

It belongs to the eukaryotic cobalamin transport proteins family. In terms of assembly, interacts with CD320 (via LDL-receptor class A domains).

It is found in the secreted. Primary vitamin B12-binding and transport protein. Delivers cobalamin to cells. The sequence is that of Transcobalamin-2 (Tcn2) from Rattus norvegicus (Rat).